The primary structure comprises 116 residues: Immunoglobulin heavy variable 2-4 (116 aa).

A signal peptide spans 1–19; the sequence is MAVLVLLFCLVTFPSCVLS. The Ig-like domain maps to 20 to 116; it reads QVQLKQSGPG…DDTAIYYCAK (97 aa). A disulfide bond links C41 and C114.

The polypeptide is Immunoglobulin heavy variable 2-4 (Mus musculus (Mouse)).